Consider the following 491-residue polypeptide: Probable glycine dehydrogenase (decarboxylating) subunit 2 (491 aa).

Residue Lys-273 is modified to N6-(pyridoxal phosphate)lysine.

This sequence belongs to the GcvP family. C-terminal subunit subfamily. The glycine cleavage system is composed of four proteins: P, T, L and H. In this organism, the P 'protein' is a heterodimer of two subunits. Requires pyridoxal 5'-phosphate as cofactor.

It carries out the reaction N(6)-[(R)-lipoyl]-L-lysyl-[glycine-cleavage complex H protein] + glycine + H(+) = N(6)-[(R)-S(8)-aminomethyldihydrolipoyl]-L-lysyl-[glycine-cleavage complex H protein] + CO2. Functionally, the glycine cleavage system catalyzes the degradation of glycine. The P protein binds the alpha-amino group of glycine through its pyridoxal phosphate cofactor; CO(2) is released and the remaining methylamine moiety is then transferred to the lipoamide cofactor of the H protein. This is Probable glycine dehydrogenase (decarboxylating) subunit 2 from Bacillus cereus (strain ATCC 10987 / NRS 248).